The chain runs to 190 residues: Small ribosomal subunit protein uS5 (190 aa).

Positions 21-84 (FADRLVAINR…EQAKRQMIRV (64 aa)) constitute an S5 DRBM domain. The interval 156–190 (KKEQSPRSVAQRRGKKVADILPKRDEAPAAEAAEA) is disordered. Over residues 171–182 (KVADILPKRDEA) the composition is skewed to basic and acidic residues.

This sequence belongs to the universal ribosomal protein uS5 family. As to quaternary structure, part of the 30S ribosomal subunit. Contacts proteins S4 and S8.

Its function is as follows. With S4 and S12 plays an important role in translational accuracy. In terms of biological role, located at the back of the 30S subunit body where it stabilizes the conformation of the head with respect to the body. The protein is Small ribosomal subunit protein uS5 of Ruegeria pomeroyi (strain ATCC 700808 / DSM 15171 / DSS-3) (Silicibacter pomeroyi).